The sequence spans 382 residues: Exostosin-1 homolog (382 aa).

Positions 1 to 20 (MQNVMKFHLVIFMLFGSVRL) are cleaved as a signal peptide. N-linked (GlcNAc...) asparagine glycosylation occurs at Asn-268.

It belongs to the glycosyltransferase 47 family. Interacts with rib-2.

The protein resides in the endoplasmic reticulum. The protein localises to the golgi apparatus. In terms of biological role, required for the biosynthesis of heparan sulfate by positively regulating N-acetylglucosamine transferase II (GlcNAcT-II) and glucuronyl transferase II (GlcAT-II) activities of glycosyltransferase rib-2. Probably not directly involved in chondroitin sulfate biosynthesis but negatively regulates chondroitin sulfate levels. Maternally required for normal ventral epidermal enclosure and for embryo elongation during the early stages of embryonic development. In addition, involved in the elongation of the pharyngeal isthmus and in the organization of the actin cytoskeleton in the pharyngeal muscles during the later stages embryonic development. In adults, regulates egg-laying and the normal morphogenesis of the vulva. Also involved in the directed migration of hermaphrodite-specific neurons. This chain is Exostosin-1 homolog (rib-1), found in Caenorhabditis elegans.